Reading from the N-terminus, the 201-residue chain is Glycerol-3-phosphate acyltransferase (201 aa).

6 helical membrane passes run 3–23, 51–71, 85–105, 116–136, 137–157, and 158–178; these read TVLF…VVVS, KAAI…VWLV, VALV…FRFV, VLLA…LVIA, YAFR…PFYY, and GLLF…ILLV.

The protein belongs to the PlsY family. Probably interacts with PlsX.

The protein localises to the cell inner membrane. The enzyme catalyses an acyl phosphate + sn-glycerol 3-phosphate = a 1-acyl-sn-glycero-3-phosphate + phosphate. The protein operates within lipid metabolism; phospholipid metabolism. Its function is as follows. Catalyzes the transfer of an acyl group from acyl-phosphate (acyl-PO(4)) to glycerol-3-phosphate (G3P) to form lysophosphatidic acid (LPA). This enzyme utilizes acyl-phosphate as fatty acyl donor, but not acyl-CoA or acyl-ACP. This Janthinobacterium sp. (strain Marseille) (Minibacterium massiliensis) protein is Glycerol-3-phosphate acyltransferase.